We begin with the raw amino-acid sequence, 96 residues long: Protein RnfH (96 aa).

It belongs to the UPF0125 (RnfH) family.

This Escherichia coli O81 (strain ED1a) protein is Protein RnfH.